Reading from the N-terminus, the 343-residue chain is Aspartate carbamoyltransferase catalytic subunit (343 aa).

The span at 1-14 (MTTDTTGRTGNPAA) shows a compositional bias: polar residues. The tract at residues 1–20 (MTTDTTGRTGNPAATASPDR) is disordered. Arginine 91 and threonine 92 together coordinate carbamoyl phosphate. Lysine 119 contacts L-aspartate. Carbamoyl phosphate contacts are provided by arginine 141, histidine 171, and glutamine 174. L-aspartate contacts are provided by arginine 204 and arginine 259. Carbamoyl phosphate-binding residues include glycine 300 and proline 301.

The protein belongs to the aspartate/ornithine carbamoyltransferase superfamily. ATCase family. As to quaternary structure, heterododecamer (2C3:3R2) of six catalytic PyrB chains organized as two trimers (C3), and six regulatory PyrI chains organized as three dimers (R2).

The enzyme catalyses carbamoyl phosphate + L-aspartate = N-carbamoyl-L-aspartate + phosphate + H(+). Its pathway is pyrimidine metabolism; UMP biosynthesis via de novo pathway; (S)-dihydroorotate from bicarbonate: step 2/3. Functionally, catalyzes the condensation of carbamoyl phosphate and aspartate to form carbamoyl aspartate and inorganic phosphate, the committed step in the de novo pyrimidine nucleotide biosynthesis pathway. The chain is Aspartate carbamoyltransferase catalytic subunit from Burkholderia lata (strain ATCC 17760 / DSM 23089 / LMG 22485 / NCIMB 9086 / R18194 / 383).